Here is a 245-residue protein sequence, read N- to C-terminus: tRNA (guanine-N(7)-)-methyltransferase (245 aa).

S-adenosyl-L-methionine contacts are provided by glutamate 69, glutamate 94, aspartate 121, and aspartate 144. Aspartate 144 is a catalytic residue. Residues lysine 148, aspartate 180, and 217–220 (TKFE) each bind substrate. The disordered stretch occupies residues 200–225 (NLSSSGDYVPRPENRPKTKFERRGEG). A compositionally biased stretch (basic and acidic residues) spans 209–225 (PRPENRPKTKFERRGEG).

This sequence belongs to the class I-like SAM-binding methyltransferase superfamily. TrmB family.

The enzyme catalyses guanosine(46) in tRNA + S-adenosyl-L-methionine = N(7)-methylguanosine(46) in tRNA + S-adenosyl-L-homocysteine. It functions in the pathway tRNA modification; N(7)-methylguanine-tRNA biosynthesis. In terms of biological role, catalyzes the formation of N(7)-methylguanine at position 46 (m7G46) in tRNA. The polypeptide is tRNA (guanine-N(7)-)-methyltransferase (Idiomarina loihiensis (strain ATCC BAA-735 / DSM 15497 / L2-TR)).